The chain runs to 283 residues: Polyamine aminopropyltransferase (283 aa).

In terms of domain architecture, PABS spans 5–238 (TTWIDEYHKG…GIWSWTFASS (234 aa)). Residue Gln-32 coordinates S-methyl-5'-thioadenosine. Spermidine contacts are provided by His-63 and Asp-87. S-methyl-5'-thioadenosine is bound by residues Glu-107 and 139-140 (DG). The active-site Proton acceptor is the Asp-158. A spermidine-binding site is contributed by 158-161 (DSSD).

It belongs to the spermidine/spermine synthase family. As to quaternary structure, homodimer or homotetramer.

The protein resides in the cytoplasm. The catalysed reaction is S-adenosyl 3-(methylsulfanyl)propylamine + putrescine = S-methyl-5'-thioadenosine + spermidine + H(+). It functions in the pathway amine and polyamine biosynthesis; spermidine biosynthesis; spermidine from putrescine: step 1/1. Functionally, catalyzes the irreversible transfer of a propylamine group from the amino donor S-adenosylmethioninamine (decarboxy-AdoMet) to putrescine (1,4-diaminobutane) to yield spermidine. In Prochlorococcus marinus (strain MIT 9215), this protein is Polyamine aminopropyltransferase.